The chain runs to 499 residues: L-asparagine permease (499 aa).

12 consecutive transmembrane segments (helical) span residues 34–54 (QVQM…GAGA), 58–78 (MAGP…FFIL), 109–129 (VAGW…ITAV), 146–166 (VFAL…VKWF), 171–191 (FWFA…GTVF), 219–239 (LLPA…IEMV), 264–284 (IGLF…WSAY), 298–318 (LGVP…ALSS), 353–373 (YAGI…NYLV), 378–398 (FEIV…FIIV), 422–442 (APFT…LMAF), and 448–468 (TYTI…WFGV).

It belongs to the amino acid-polyamine-organocation (APC) superfamily. Amino acid transporter (AAT) (TC 2.A.3.1) family.

Its subcellular location is the cell inner membrane. This chain is L-asparagine permease (ansP), found in Escherichia coli (strain K12).